Consider the following 526-residue polypeptide: DNA polymerase epsilon subunit B (526 aa).

This sequence belongs to the DNA polymerase epsilon subunit B family. In terms of assembly, subunit of the DNA polymerase II. Interacts with POL2A (via C-terminus).

Its subcellular location is the nucleus. Functionally, as accessory component of DNA polymerase II participates in chromosomal DNA replication. Required for the timing and determination of cell fate during plant embryogenesis and root pole development, by promoting cell cycle and cell type patterning. Necessary for proper shoot (SAM) and root apical meristem (RAM) functions. Is essential to promote the first divisions of the zygote. This is DNA polymerase epsilon subunit B from Arabidopsis thaliana (Mouse-ear cress).